Consider the following 346-residue polypeptide: Methylthioribose-1-phosphate isomerase (346 aa).

Substrate is bound by residues 48–50 (RGA), arginine 91, and glutamine 196. Aspartate 237 (proton donor) is an active-site residue. 247–248 (NK) serves as a coordination point for substrate.

This sequence belongs to the eIF-2B alpha/beta/delta subunits family. MtnA subfamily.

It carries out the reaction 5-(methylsulfanyl)-alpha-D-ribose 1-phosphate = 5-(methylsulfanyl)-D-ribulose 1-phosphate. It functions in the pathway amino-acid biosynthesis; L-methionine biosynthesis via salvage pathway; L-methionine from S-methyl-5-thio-alpha-D-ribose 1-phosphate: step 1/6. In terms of biological role, catalyzes the interconversion of methylthioribose-1-phosphate (MTR-1-P) into methylthioribulose-1-phosphate (MTRu-1-P). The sequence is that of Methylthioribose-1-phosphate isomerase from Thermosipho melanesiensis (strain DSM 12029 / CIP 104789 / BI429).